The sequence spans 258 residues: Imidazole glycerol phosphate synthase subunit HisF (258 aa).

Catalysis depends on residues Asp-11 and Asp-130.

It belongs to the HisA/HisF family. In terms of assembly, heterodimer of HisH and HisF.

It localises to the cytoplasm. The enzyme catalyses 5-[(5-phospho-1-deoxy-D-ribulos-1-ylimino)methylamino]-1-(5-phospho-beta-D-ribosyl)imidazole-4-carboxamide + L-glutamine = D-erythro-1-(imidazol-4-yl)glycerol 3-phosphate + 5-amino-1-(5-phospho-beta-D-ribosyl)imidazole-4-carboxamide + L-glutamate + H(+). The protein operates within amino-acid biosynthesis; L-histidine biosynthesis; L-histidine from 5-phospho-alpha-D-ribose 1-diphosphate: step 5/9. Functionally, IGPS catalyzes the conversion of PRFAR and glutamine to IGP, AICAR and glutamate. The HisF subunit catalyzes the cyclization activity that produces IGP and AICAR from PRFAR using the ammonia provided by the HisH subunit. The protein is Imidazole glycerol phosphate synthase subunit HisF of Xanthobacter autotrophicus (strain ATCC BAA-1158 / Py2).